The sequence spans 193 residues: Proton-translocating ferredoxin:NAD(+) oxidoreductase complex subunit A (193 aa).

6 consecutive transmembrane segments (helical) span residues 11 to 31 (AVVV…FFGV), 39 to 59 (VGMG…AWVV), 62 to 82 (FVLI…LLIA), 102 to 122 (MWGI…VPIL), 134 to 154 (VVNA…MASL), and 171 to 191 (GVAF…SGMI).

This sequence belongs to the NqrDE/RnfAE family. The complex is composed of six subunits: RnfA, RnfB, RnfC, RnfD, RnfE and RnfG.

The protein resides in the cell membrane. Functionally, part of a membrane-bound complex that couples electron transfer with translocation of ions across the membrane. Couples electron transfer from reduced ferredoxin to NAD(+) with translocation of H(+) out of the cell. Essential for energy conservation during autotrophic growth. Contributes to ATP synthesis during heterotrophic growth. The polypeptide is Proton-translocating ferredoxin:NAD(+) oxidoreductase complex subunit A (Clostridium ljungdahlii (strain ATCC 55383 / DSM 13528 / PETC)).